The chain runs to 369 residues: MLTSQKVSRVLLHSSFLKTPVSTQSRSFVFTTIATTLFGSVLWSKNNVLASKMENHELHYNDPNDKYRKLLEKKRGPAFTRAAAEYPGQVRLYNYEKFLMFLGSSIGSFFHPEENKYIVALGESTAIEPVLKRLQHAMLSDPTGRQILRERPRITSTSLDLDYLRSLPDNTIGKSYITWLDREGVSPDTRVPVRYIDNEELAYIFQRYRECHDFYHAITGLPIIIEGEISVKVLEYMNIGIPMSGLGALFAPLRLKPSQRKRLREIYYPWAIKNGLYSKPLINVYWEKILDKDINEFRREMGIEQPPDLRDLRKEYFAKKRREKELKAAAAAATVTQRQRQQQRATATAANATSASSANVKPSNTAGAM.

The transit peptide at 1–35 (MLTSQKVSRVLLHSSFLKTPVSTQSRSFVFTTIAT) directs the protein to the mitochondrion. Positions 212, 213, 216, and 228 each coordinate Zn(2+). Low complexity predominate over residues 329-360 (AAAAATVTQRQRQQQRATATAANATSASSANV). The tract at residues 329 to 369 (AAAAATVTQRQRQQQRATATAANATSASSANVKPSNTAGAM) is disordered.

This sequence belongs to the COQ4 family. In terms of assembly, component of a multi-subunit COQ enzyme complex, composed of at least COQ3, COQ4, COQ5, COQ6, COQ7 and COQ9. Zn(2+) is required as a cofactor.

It is found in the mitochondrion inner membrane. It catalyses the reaction a 4-hydroxy-3-methoxy-5-(all-trans-polyprenyl)benzoate + H(+) = a 2-methoxy-6-(all-trans-polyprenyl)phenol + CO2. Its pathway is cofactor biosynthesis; ubiquinone biosynthesis. In terms of biological role, lyase that catalyzes the C1-decarboxylation of 4-hydroxy-3-methoxy-5-(all-trans-polyprenyl)benzoic acid into 2-methoxy-6-(all-trans-polyprenyl)phenol during ubiquinone biosynthesis. In Lodderomyces elongisporus (strain ATCC 11503 / CBS 2605 / JCM 1781 / NBRC 1676 / NRRL YB-4239) (Yeast), this protein is Ubiquinone biosynthesis protein COQ4, mitochondrial.